The chain runs to 246 residues: Dihydromethanopterin reductase (acceptor) (246 aa).

4Fe-4S ferredoxin-type domains are found at residues 150–178 (LPYAIDKKKCKLCLKCINVCPNGAIVKRD) and 179–208 (NFVEILLSKCLGCGNCKKVCPYNAIIEGKE). Cys-159, Cys-162, Cys-165, Cys-169, Cys-188, Cys-191, Cys-194, and Cys-198 together coordinate [4Fe-4S] cluster.

In terms of assembly, homodimer. Requires [4Fe-4S] cluster as cofactor.

It catalyses the reaction 5,6,7,8-tetrahydromethanopterin + A = 7,8-dihydromethanopterin + AH2. It functions in the pathway cofactor biosynthesis; 5,6,7,8-tetrahydromethanopterin biosynthesis. Involved in the biosynthesis of tetrahydromethanopterin, a coenzyme used in methanogenesis. Catalyzes the reduction of dihydromethanopterin (H(2)MPT) to tetrahydromethanopterin (H(4)MPT). Ferredoxin may serve as an electron donor. The sequence is that of Dihydromethanopterin reductase (acceptor) from Methanocaldococcus jannaschii (strain ATCC 43067 / DSM 2661 / JAL-1 / JCM 10045 / NBRC 100440) (Methanococcus jannaschii).